The chain runs to 433 residues: Glutamate-1-semialdehyde 2,1-aminomutase (433 aa).

The residue at position 271 (lysine 271) is an N6-(pyridoxal phosphate)lysine.

It belongs to the class-III pyridoxal-phosphate-dependent aminotransferase family. HemL subfamily. In terms of assembly, homodimer. It depends on pyridoxal 5'-phosphate as a cofactor.

The protein resides in the cytoplasm. It carries out the reaction (S)-4-amino-5-oxopentanoate = 5-aminolevulinate. It participates in porphyrin-containing compound metabolism; protoporphyrin-IX biosynthesis; 5-aminolevulinate from L-glutamyl-tRNA(Glu): step 2/2. Its pathway is porphyrin-containing compound metabolism; chlorophyll biosynthesis. The chain is Glutamate-1-semialdehyde 2,1-aminomutase from Prochlorococcus marinus subsp. pastoris (strain CCMP1986 / NIES-2087 / MED4).